Reading from the N-terminus, the 116-residue chain is Probable early E4 11 kDa protein (116 aa).

In Human adenovirus A serotype 12 (HAdV-12), this protein is Probable early E4 11 kDa protein.